We begin with the raw amino-acid sequence, 717 residues long: MQKFTFFVSCAKGIELLLKDELERLGISSQEKLAGVEFEGSIKDAYKVCIYSYLASQVMLKVATDKVINQQDLYEFISSINWMDYFAVDKTFKIIISGKHYDFNNTMFVSQKTKDAIVDQFRNVTNQRPNIDTENPDNVIKLHLHKQFVNVFLCLNIDSLHKRSYRQFQGQAPLKESLAAAILIKAGWLEELKKHQPILIDPMCGSGTILIEAALMAKNIAPVLLNKEFKIFNSKFHNQELWDNLLEIAKNSQKVTNAIICGFDIDNNVLDKAQRNIYQAGVEDVITVKRQDIRDLENEFESEGLIVTNPPYGERLYGDQLDELLDIFNGFGNRLSQDFYGWKVAVLTSFADSIKEMQLRTTERNKFYNGAIETILYQFEINEHAKFKHETQLEKNIRIAEASAQKSDEHIDFANKLKKNLKSLKPWLKQTGLECYRLYDADIPTFAVAVDVYSEHIFLQEYRADATIDQNIAKQRFYQAIYQIHKTLDIKYENIHTRVRQRQKGKEQYQKENDKNKFHIINEFDAKFYVNFDDYLDTGIFLDHRKIRQLVAKAAKNKTLLNLFSYTCTASVHAALKGAKTTSVDMSNTYLEWGKNNFTLNNIDAKKHSFIQADCISWLKTNKDKFDVIFLDPPTFSNSKRMDDILDIQRDHELLINLAMDSLKKDGILYFSNNYRRFKMSPQILEKFNCENIDKICLSRDFLSNKNIHNCWEIKYK.

One can recognise a THUMP domain in the interval 44-155 (DAYKVCIYSY…KQFVNVFLCL (112 aa)).

The protein belongs to the methyltransferase superfamily. RlmKL family.

Its subcellular location is the cytoplasm. The catalysed reaction is guanosine(2445) in 23S rRNA + S-adenosyl-L-methionine = N(2)-methylguanosine(2445) in 23S rRNA + S-adenosyl-L-homocysteine + H(+). The enzyme catalyses guanosine(2069) in 23S rRNA + S-adenosyl-L-methionine = N(2)-methylguanosine(2069) in 23S rRNA + S-adenosyl-L-homocysteine + H(+). Specifically methylates the guanine in position 2445 (m2G2445) and the guanine in position 2069 (m7G2069) of 23S rRNA. This chain is Ribosomal RNA large subunit methyltransferase K/L, found in Francisella tularensis subsp. tularensis (strain SCHU S4 / Schu 4).